The primary structure comprises 870 residues: MTSQTFTTSSATPPTRGVVPDKPALEGLEVKWGKIWEDEQLYAFDATTVDSREQVFAIDTPPPTVSGHLHPGHVFSYTHTDTVARYQRMRGKKVFYPMGWDDNGLPTERRVQNYYGVRCDPSLPYDPDFTPPSKPNPKRQVPISRRNFVELCVELTAVDEKTFQDLWRAVGLSVDWNQLYTTISPESQRIAQLAFLRNYARGEAYLSDAPTLWDVTFSTAVAQAELEARDYPGAYHRLGFHRPNGEDVFIETTRPELLAACCALIAHPDDERYQHLFGTTVTTPLYGVEVPVLAHSAAEMDKGAGIAMCCTFGDLTDVAWWRELQLPTRTIIGRDGRILSETPQWIIDAGSAERYEAIAGKTTFTARKLVVEALVESGEMDGEPKPTQRKANFYEKGDKPLEIIGTRQWYIRNGGRDDDLRNALLERGRELEWVPEHMRHRYENWVEGLNGDWLISRQRFFGVPFPVWYPLGTDGEPDYDHPLLPDESALPVDPASQPPSGYQESQRGVAGGFIGDPDVMDTWATSSLTPQIVTGWERDADLFAKTFPMDFAPEAHDIIRTWVFSRVVRAHLENGMLPWKRAAISGFVTDPDRKKMSKSKGNTVVPTEIIDQFGADAVRWRAAMARPGMDSPFDKAQMKVGRRLAMKILNASKFVLGFGEGGQVCDITNPADLSMLAGLRELIAEATEAFDKFNYTAALEVCEQFFWTFCDDYLELIKERAYDSEGADNAGALSARTALRLALDVMLRLFAPFLPFVTEEVWSWWKDGSVHTSSWPTADEVPATGDVDLMSDVSAALVELRGVKSTHKVPMRTPILSARISAPASVIANLKAVESDLTKVSKTESLTFLTGGDKLVLEAELGEPPAKRKK.

Residues 1-13 show a composition bias toward polar residues; sequence MTSQTFTTSSATP. The tract at residues 1–21 is disordered; it reads MTSQTFTTSSATPPTRGVVPD. Residues 63-73 carry the 'HIGH' region motif; sequence PTVSGHLHPGH. Residues 479–505 are disordered; it reads YDHPLLPDESALPVDPASQPPSGYQES. The 'KMSKS' region motif lies at 595–599; that stretch reads KMSKS. Lys598 is an ATP binding site.

It belongs to the class-I aminoacyl-tRNA synthetase family. ValS type 2 subfamily. Monomer.

Its subcellular location is the cytoplasm. It catalyses the reaction tRNA(Val) + L-valine + ATP = L-valyl-tRNA(Val) + AMP + diphosphate. Functionally, catalyzes the attachment of valine to tRNA(Val). As ValRS can inadvertently accommodate and process structurally similar amino acids such as threonine, to avoid such errors, it has a 'posttransfer' editing activity that hydrolyzes mischarged Thr-tRNA(Val) in a tRNA-dependent manner. In Cutibacterium acnes (strain DSM 16379 / KPA171202) (Propionibacterium acnes), this protein is Valine--tRNA ligase.